Reading from the N-terminus, the 1167-residue chain is ATP-dependent helicase/deoxyribonuclease subunit B (1167 aa).

In terms of domain architecture, UvrD-like helicase ATP-binding spans 1–359 (MSLRFLLGRS…IRQTEAYRDL (359 aa)). 8–15 (GRSGSGKT) lines the ATP pocket. Residues 282–588 (ANRRHEDRAL…EFSLVPPAMD (307 aa)) enclose the UvrD-like helicase C-terminal domain. [4Fe-4S] cluster contacts are provided by C804, C1126, C1129, and C1135.

Belongs to the helicase family. AddB/RexB type 1 subfamily. In terms of assembly, heterodimer of AddA and AddB. Mg(2+) is required as a cofactor. Requires [4Fe-4S] cluster as cofactor.

Its function is as follows. The heterodimer acts as both an ATP-dependent DNA helicase and an ATP-dependent, dual-direction single-stranded exonuclease. Recognizes the chi site generating a DNA molecule suitable for the initiation of homologous recombination. The AddB subunit has 5' -&gt; 3' nuclease activity but not helicase activity. In Geobacillus kaustophilus (strain HTA426), this protein is ATP-dependent helicase/deoxyribonuclease subunit B.